The following is a 358-amino-acid chain: G-protein coupled receptor 87 (358 aa).

Over 1-47 the chain is Extracellular; the sequence is MGLNLTLTKLPGNELYSQASHTANSTSEGHGKNSTLHNKFDTIILPV. Residues asparagine 4, asparagine 24, and asparagine 33 are each glycosylated (N-linked (GlcNAc...) asparagine). The chain crosses the membrane as a helical span at residues 48–68; that stretch reads LYLVIFVASILLNGLAVWIFF. The Cytoplasmic segment spans residues 69–75; the sequence is HIRNKTS. The helical transmembrane segment at 76–96 threads the bilayer; sequence FIFYLKNIVVADLIMTLTFPF. Topologically, residues 97 to 116 are extracellular; sequence RIVRDAGFGPWYFEFILCRY. An intrachain disulfide couples cysteine 114 to cysteine 192. The chain crosses the membrane as a helical span at residues 117–137; it reads TSVLFYANMYTSIVFLGLISV. The Cytoplasmic portion of the chain corresponds to 138 to 159; it reads DRYLKVVKPFGDSRMYSITFTK. A helical membrane pass occupies residues 160–180; it reads VLSVCVWVIMAILSLPNIILT. Residues 181–208 lie on the Extracellular side of the membrane; that stretch reads NGQPTKENIHDCMKLKSPLGAKWHMAVT. Residues 209 to 229 form a helical membrane-spanning segment; the sequence is YVDSCLFVAVLVILIGCYIAI. The Cytoplasmic segment spans residues 230–256; sequence SRYIHKSSRQFISQSSRKRKHNQSIRV. A helical membrane pass occupies residues 257–277; it reads VVAVFFTCFLPYHLCRIPFTF. Over 278 to 297 the chain is Extracellular; sequence SNLDRLLDESAHKILYYCKE. A helical transmembrane segment spans residues 298 to 318; the sequence is MTLFLSACNVCLDPIIYFFMC. The Cytoplasmic portion of the chain corresponds to 319 to 358; the sequence is KSFSRRLFKKSNIRTRSESIRSLQSVRRSEVRIYYDYTDV.

This sequence belongs to the G-protein coupled receptor 1 family. In terms of tissue distribution, expressed at high levels in testis and brain and to a lesser extent placenta, ovary, prostate, and skeletal muscle but not in heart, lung, kidney, liver or intestine.

The protein resides in the cell membrane. Functionally, receptor for lysophosphatidic acid (LPA). Necessary for p53/TP53-dependent survival in response to DNA damage. Promotes the Hippo-YAP signaling pathway and thereby modulates glycolysis and oxidative stress production by the regulation of hexokinase-2/HK2. The protein is G-protein coupled receptor 87 (Gpr87) of Mus musculus (Mouse).